The sequence spans 2596 residues: Protein unc-79 homolog (2596 aa).

Phosphoserine is present on residues serine 754 and serine 758. 6 disordered regions span residues 907–931, 1539–1573, 1594–1632, 1648–1679, 1695–1832, and 1863–1909; these read GPEGEEEENPAAKHGENPGNRTVPS, SQRQNDHHGRSRQNSATRPDNTEIPKNPGTEGFQE, VDSPGKPAPREDLDLIDLSSDSTSGPEKHSILSTSDSDS, EEEEMMNQGNGGALGNNAASSPSIPSQPSVLS, KDFS…FKIQ, and LGEQ…KQIQ. The span at 1594 to 1606 shows a compositional bias: basic and acidic residues; sequence VDSPGKPAPREDL. Low complexity predominate over residues 1662–1679; it reads GNNAASSPSIPSQPSVLS. Positions 1704-1713 are enriched in polar residues; it reads NHQSASNEDS. Residues 1726–1735 show a composition bias toward basic and acidic residues; that stretch reads ELSKSEELRE. A compositionally biased stretch (polar residues) spans 1897-1908; the sequence is ETSSHSSISKQI. 2 helical membrane passes run 2184-2204 and 2426-2446; these read LLSFVIQNAVFTLAYLVELCG and CVLHMCSLFHAFIFAQLWTVY.

The protein belongs to the unc-79 family. In terms of assembly, NALCN complex consists of NALCN and auxiliary subunits, UNC79, UNC80 and NACL1. These auxiliary subunits are essential for the NALCN channel function. UNC80 bridges NALCN to UNC79. Interacts with NALCN. Interacts with UNC80.

The protein resides in the cell membrane. Its function is as follows. Auxiliary subunit of the NALCN sodium channel complex. The NALCN sodium channel complex is a voltage-gated ion channel responsible for the resting Na(+) permeability that controls neuronal excitability. Activated by neuropeptides substance P, neurotensin, and extracellular calcium that regulates neuronal excitability by controlling the sizes of NALCN-dependent sodium-leak current. The sequence is that of Protein unc-79 homolog (Unc79) from Mus musculus (Mouse).